We begin with the raw amino-acid sequence, 300 residues long: Geranyl diphosphate 2-C-methyltransferase (300 aa).

Residues Met-1 to Ala-24 form a disordered region.

It belongs to the geranyl diphosphate 2-C-methyltransferase family. Requires Mg(2+) as cofactor.

The catalysed reaction is (2E)-geranyl diphosphate + S-adenosyl-L-methionine = (E)-2-methylgeranyl diphosphate + S-adenosyl-L-homocysteine + H(+). Its function is as follows. Catalyzes the SAM-dependent methylation of geranyl diphosphate (GPP) to yield (E)-2-methylgeranyl diphosphate (2-MeGPP). This chain is Geranyl diphosphate 2-C-methyltransferase (gdpmt), found in Streptomyces lasalocidi (Streptomyces lasaliensis).